The sequence spans 355 residues: Guanine nucleotide-binding protein G(i) subunit alpha-2 (355 aa).

Glycine 2 carries N-myristoyl glycine lipidation. The S-palmitoyl cysteine moiety is linked to residue cysteine 3. The region spanning arginine 32–phenylalanine 355 is the G-alpha domain. The interval lysine 35–threonine 48 is G1 motif. GTP contacts are provided by residues glycine 40–serine 47, leucine 176–threonine 182, aspartate 201–glutamine 205, asparagine 270–aspartate 273, and alanine 327. The Mg(2+) site is built by serine 47 and threonine 182. The segment at aspartate 174–threonine 182 is G2 motif. Residues phenylalanine 197–arginine 206 form a G3 motif region. Residues isoleucine 266–aspartate 273 form a G4 motif region. The G5 motif stretch occupies residues threonine 325–threonine 330.

The protein belongs to the G-alpha family. G(i/o/t/z) subfamily. G proteins are composed of 3 units; alpha, beta and gamma. The alpha chain contains the guanine nucleotide binding site. In this context, interacts with GNB2. Interacts with UNC5B. Interacts with GPSM1. Interacts with RGS12 and RGS14. Interacts (inactive GDP-bound form) with NUCB1 (via GBA motif); the interaction leads to activation of GNAI3. Interacts (inactive GDP-bound form) with CCDC88C/DAPLE (via GBA motif). Interacts (inactive GDP-bound form) with CCDC8A/GIV (via GBA motif). Ubiquitously expressed. Most abundant in the lung and in the spleen.

Its subcellular location is the cytoplasm. It is found in the cytoskeleton. The protein resides in the microtubule organizing center. It localises to the centrosome. The protein localises to the cell membrane. Its subcellular location is the membrane. In terms of biological role, guanine nucleotide-binding proteins (G proteins) are involved as modulators or transducers in various transmembrane signaling systems. The G(i) proteins are involved in hormonal regulation of adenylate cyclase: they inhibit the cyclase in response to beta-adrenergic stimuli. May play a role in cell division. This is Guanine nucleotide-binding protein G(i) subunit alpha-2 (GNAI2) from Cavia porcellus (Guinea pig).